The primary structure comprises 829 residues: Leucine--tRNA ligase (829 aa).

The 'HIGH' region motif lies at 40 to 50; sequence PYPSGNIHMGH. The 'KMSKS' region signature appears at 581-585; it reads KMSKS. Lys-584 contributes to the ATP binding site.

The protein belongs to the class-I aminoacyl-tRNA synthetase family.

The protein localises to the cytoplasm. It catalyses the reaction tRNA(Leu) + L-leucine + ATP = L-leucyl-tRNA(Leu) + AMP + diphosphate. The polypeptide is Leucine--tRNA ligase (Nitratidesulfovibrio vulgaris (strain ATCC 29579 / DSM 644 / CCUG 34227 / NCIMB 8303 / VKM B-1760 / Hildenborough) (Desulfovibrio vulgaris)).